We begin with the raw amino-acid sequence, 373 residues long: Glutamate 5-kinase (373 aa).

Lysine 16 serves as a coordination point for ATP. Residues serine 56, aspartate 143, and asparagine 155 each contribute to the substrate site. 175 to 176 is a binding site for ATP; it reads TD. The 79-residue stretch at 281 to 359 folds into the PUA domain; sequence RGRLTLDDGA…SRIDSLLGYK (79 aa).

It belongs to the glutamate 5-kinase family.

It localises to the cytoplasm. It carries out the reaction L-glutamate + ATP = L-glutamyl 5-phosphate + ADP. It participates in amino-acid biosynthesis; L-proline biosynthesis; L-glutamate 5-semialdehyde from L-glutamate: step 1/2. In terms of biological role, catalyzes the transfer of a phosphate group to glutamate to form L-glutamate 5-phosphate. The sequence is that of Glutamate 5-kinase from Saccharophagus degradans (strain 2-40 / ATCC 43961 / DSM 17024).